Here is a 541-residue protein sequence, read N- to C-terminus: Chaperonin GroEL 2 (541 aa).

Residues 30–33 (TLGP), Lys-51, 87–91 (DGTTT), Gly-414, and Asp-495 contribute to the ATP site.

The protein belongs to the chaperonin (HSP60) family. In terms of assembly, forms a cylinder of 14 subunits composed of two heptameric rings stacked back-to-back. Interacts with the co-chaperonin GroES.

It is found in the cytoplasm. The enzyme catalyses ATP + H2O + a folded polypeptide = ADP + phosphate + an unfolded polypeptide.. Together with its co-chaperonin GroES, plays an essential role in assisting protein folding. The GroEL-GroES system forms a nano-cage that allows encapsulation of the non-native substrate proteins and provides a physical environment optimized to promote and accelerate protein folding. This chain is Chaperonin GroEL 2, found in Cereibacter sphaeroides (Rhodobacter sphaeroides).